The sequence spans 472 residues: Inactive CLIP domain-containing serine protease A3 (472 aa).

2 helical membrane-spanning segments follow: residues 51–71 and 78–98; these read ISFVMCAIYYLQLYIKAWSSM and LPALGVLILLGTTWTPVHTYA. 4 N-linked (GlcNAc...) asparagine glycosylation sites follow: Asn-122, Asn-133, Asn-149, and Asn-152. One can recognise a Peptidase S1 domain in the interval 223-470; that stretch reads VAAAKAPAAG…YVPWITSTVS (248 aa). 3 disulfides stabilise this stretch: Cys-354-Cys-428, Cys-386-Cys-408, and Cys-418-Cys-446.

This sequence belongs to the peptidase S1 family. CLIP subfamily. As to expression, expressed at highest levels in head and salivary gland. Expressed in ovary and carcass. Minimal expression in midgut.

Its subcellular location is the membrane. Functionally, probable inactive serine protease. Induces migration of cultured mouse embryonic fibroblasts. Its function is as follows. (Microbial infection) Promotes dengue virus type 2 replication in the host. This Aedes aegypti (Yellowfever mosquito) protein is Inactive CLIP domain-containing serine protease A3.